Here is a 158-residue protein sequence, read N- to C-terminus: RNA pyrophosphohydrolase (158 aa).

A Nudix hydrolase domain is found at 9–151 (PLRNGVGIVV…KLHVYKDVKE (143 aa)). A Nudix box motif is present at residues 43-64 (GGVDKGEDYLTAAYRELEEETS).

This sequence belongs to the Nudix hydrolase family. RppH subfamily. A divalent metal cation serves as cofactor.

Its function is as follows. Accelerates the degradation of transcripts by removing pyrophosphate from the 5'-end of triphosphorylated RNA, leading to a more labile monophosphorylated state that can stimulate subsequent ribonuclease cleavage. This Pelagibacter ubique (strain HTCC1062) protein is RNA pyrophosphohydrolase.